Consider the following 341-residue polypeptide: Ketol-acid reductoisomerase (NADP(+)) (341 aa).

A KARI N-terminal Rossmann domain is found at 2–182 (TDIVYDKDAD…GGLRAGGIRT (181 aa)). NADP(+) contacts are provided by residues 25–28 (YGSQ), Lys-48, Ser-51, Ser-53, and 83–86 (DQHQ). Residue His-108 is part of the active site. NADP(+) is bound at residue Gly-134. One can recognise a KARI C-terminal knotted domain in the interval 183–328 (TFTEETETDL…RELRKLFAWN (146 aa)). Positions 191, 195, 227, and 231 each coordinate Mg(2+). Ser-252 contributes to the substrate binding site.

It belongs to the ketol-acid reductoisomerase family. It depends on Mg(2+) as a cofactor.

It catalyses the reaction (2R)-2,3-dihydroxy-3-methylbutanoate + NADP(+) = (2S)-2-acetolactate + NADPH + H(+). The catalysed reaction is (2R,3R)-2,3-dihydroxy-3-methylpentanoate + NADP(+) = (S)-2-ethyl-2-hydroxy-3-oxobutanoate + NADPH + H(+). Its pathway is amino-acid biosynthesis; L-isoleucine biosynthesis; L-isoleucine from 2-oxobutanoate: step 2/4. The protein operates within amino-acid biosynthesis; L-valine biosynthesis; L-valine from pyruvate: step 2/4. In terms of biological role, involved in the biosynthesis of branched-chain amino acids (BCAA). Catalyzes an alkyl-migration followed by a ketol-acid reduction of (S)-2-acetolactate (S2AL) to yield (R)-2,3-dihydroxy-isovalerate. In the isomerase reaction, S2AL is rearranged via a Mg-dependent methyl migration to produce 3-hydroxy-3-methyl-2-ketobutyrate (HMKB). In the reductase reaction, this 2-ketoacid undergoes a metal-dependent reduction by NADPH to yield (R)-2,3-dihydroxy-isovalerate. The protein is Ketol-acid reductoisomerase (NADP(+)) of Clavibacter michiganensis subsp. michiganensis (strain NCPPB 382).